We begin with the raw amino-acid sequence, 396 residues long: Imidazolonepropionase (396 aa).

Fe(3+) contacts are provided by His-69 and His-71. Residues His-69 and His-71 each coordinate Zn(2+). 4-imidazolone-5-propanoate contacts are provided by Arg-78, Tyr-136, and His-163. Tyr-136 serves as a coordination point for N-formimidoyl-L-glutamate. His-224 is a Fe(3+) binding site. Residue His-224 coordinates Zn(2+). Gln-227 is a 4-imidazolone-5-propanoate binding site. Residue Asp-298 participates in Fe(3+) binding. Asp-298 is a binding site for Zn(2+). Asn-300 and Gly-302 together coordinate N-formimidoyl-L-glutamate. Thr-303 is a 4-imidazolone-5-propanoate binding site.

This sequence belongs to the metallo-dependent hydrolases superfamily. HutI family. Zn(2+) serves as cofactor. It depends on Fe(3+) as a cofactor.

It is found in the cytoplasm. The catalysed reaction is 4-imidazolone-5-propanoate + H2O = N-formimidoyl-L-glutamate. Its pathway is amino-acid degradation; L-histidine degradation into L-glutamate; N-formimidoyl-L-glutamate from L-histidine: step 3/3. Functionally, catalyzes the hydrolytic cleavage of the carbon-nitrogen bond in imidazolone-5-propanoate to yield N-formimidoyl-L-glutamate. It is the third step in the universal histidine degradation pathway. This is Imidazolonepropionase from Cutibacterium acnes (strain DSM 16379 / KPA171202) (Propionibacterium acnes).